The following is a 159-amino-acid chain: RNA pyrophosphohydrolase (159 aa).

The Nudix hydrolase domain maps to 6–149; the sequence is GYRPNVGIVI…KRNVYRRMMK (144 aa). A Nudix box motif is present at residues 38-59; sequence GGINSGETAEQAMFRELFEEVG.

The protein belongs to the Nudix hydrolase family. RppH subfamily. The cofactor is a divalent metal cation.

Its function is as follows. Accelerates the degradation of transcripts by removing pyrophosphate from the 5'-end of triphosphorylated RNA, leading to a more labile monophosphorylated state that can stimulate subsequent ribonuclease cleavage. The protein is RNA pyrophosphohydrolase of Baumannia cicadellinicola subsp. Homalodisca coagulata.